Consider the following 790-residue polypeptide: E3 ubiquitin-protein ligase Jade-2 (790 aa).

Disordered stretches follow at residues 1–52 (MEEK…PSEV) and 111–130 (GPPA…SQPD). Phosphoserine is present on residues S9 and S15. Low complexity predominate over residues 9-28 (SISSDNSDTTDSHATSTSAS). N6-acetyllysine is present on residues K32 and K38. S117 bears the Phosphoserine mark. Residues 199–249 (DVVCDVCRSPEGEDGNEMVFCDKCNVCVHQACYGILKVPTGSWLCRTCALG) form a PHD-type 1 zinc finger. A C2HC pre-PHD-type zinc finger spans residues 251–285 (QPKCLLCPKRGGALKPTRSGTKWVHVSCALWIPEV). K298 carries the N6-acetyllysine modification. The segment at 309 to 365 (LSCSLCKECTGTCIQCSMPSCVTAFHVTCAFDHGLEMRTILADNDEVKFKSFCQEHS) adopts a PHD-type 2 zinc-finger fold. Disordered stretches follow at residues 361-386 (CQEH…AGED) and 578-777 (SFMR…PREA). Positions 372 to 381 (EPTSEPTEPS) are enriched in polar residues. The span at 593-606 (KARGRTRLPAKKKP) shows a compositional bias: basic residues. The segment covering 684-693 (AASVAADSDV) has biased composition (low complexity). Over residues 737–747 (ERPKVSLHFDT) the composition is skewed to basic and acidic residues. Over residues 757 to 767 (EMSDSDVEAED) the composition is skewed to acidic residues.

The protein belongs to the JADE family. Component of the HBO1 complex composed at least of ING4 or ING5, MYST2/HBO1, MEAF6, and one of JADE1, JADE2 and JADE3. Interacts (via C-terminus) with KDM1A (via AOD/Tower domain).

The catalysed reaction is S-ubiquitinyl-[E2 ubiquitin-conjugating enzyme]-L-cysteine + [acceptor protein]-L-lysine = [E2 ubiquitin-conjugating enzyme]-L-cysteine + N(6)-ubiquitinyl-[acceptor protein]-L-lysine.. It functions in the pathway protein modification; protein ubiquitination. Scaffold subunit of some HBO1 complexes, which have a histone H4 acetyltransferase activity. Acts as an E3 ubiquitin-protein ligase mediating the ubiquitination and subsequent proteasomal degradation of target protein histone demethylase KDM1A. Also acts as a ubiquitin ligase E3 toward itself. Positive regulator of neurogenesis. The sequence is that of E3 ubiquitin-protein ligase Jade-2 (JADE2) from Homo sapiens (Human).